The sequence spans 1352 residues: Ubiquitin carboxyl-terminal hydrolase 31 (1352 aa).

Residues 1-16 (MSKVTAPGSGPPAAAS) are compositionally biased toward low complexity. 2 disordered regions span residues 1–62 (MSKV…RSVG) and 79–119 (SSEG…PPAC). The segment covering 32–43 (RAGGGGAGGPGA) has biased composition (gly residues). Residues 44-62 (SGPAAPSSPSSPSSARSVG) are compositionally biased toward low complexity. The segment covering 95–117 (PPGPAAAPTPPPCPPPPASPAPP) has biased composition (pro residues). The USP domain occupies 128–765 (AGLRNHGNTC…TAYILFYQRR (638 aa)). Cys-137 serves as the catalytic Nucleophile. Residues 162 to 185 (RAGRPEPSPDPEQPAGRGAQGQGE) form a disordered region. His-723 (proton acceptor) is an active-site residue. Disordered regions lie at residues 812–835 (LASL…FSTR), 919–939 (SSSY…AVGR), and 951–1352 (DESD…QKPQ). Over residues 958–970 (LNSSVVDTQSKHS) the composition is skewed to polar residues. 4 stretches are compositionally biased toward low complexity: residues 992–1001 (VDQSDSVDSS), 1051–1070 (SSLS…SLKP), 1078–1089 (DSSSRGSGRHSS), and 1101–1138 (PKSQ…GPAT). The segment covering 1148–1159 (RTSDHSLSREGS) has biased composition (basic and acidic residues). Over residues 1160 to 1181 (RQSLGSDRASATSTSKPNSPRV) the composition is skewed to polar residues. A compositionally biased stretch (low complexity) spans 1198-1210 (SSSMASLRSPSTS). 2 stretches are compositionally biased toward basic and acidic residues: residues 1215–1225 (LKRDSKSEDKG) and 1234–1243 (RQKETRRSTD). A compositionally biased stretch (low complexity) spans 1251 to 1264 (SKKAGGSSVKSVCK). Lys-1264 carries the post-translational modification N6-acetyllysine. Composition is skewed to polar residues over residues 1278–1290 (PASQ…TTGK) and 1341–1352 (MQTSARPSQKPQ).

Belongs to the peptidase C19 family. Post-translationally, acetylated at Lys-1264. Acetylation decreases activity. Deacetylated by SIRT1. In terms of tissue distribution, widely expressed.

The enzyme catalyses Thiol-dependent hydrolysis of ester, thioester, amide, peptide and isopeptide bonds formed by the C-terminal Gly of ubiquitin (a 76-residue protein attached to proteins as an intracellular targeting signal).. Functionally, deubiquitinase that recognizes and hydrolyzes the peptide bond at the C-terminal Gly of ubiquitin. May play a role in the regulation of NF-kappa-B signaling pathway by deubiquitinating TRAF2. Its function is as follows. (Microbial infection) Plays a positive role in foot-and-mouth disease and classical swine fever viral infection. Mechanistically, associates with internal ribosomal entry site (IRES) element within the 5'-untranslated region of viral genomes to promote translation of the virus-encoded polyprotein. The polypeptide is Ubiquitin carboxyl-terminal hydrolase 31 (USP31) (Homo sapiens (Human)).